Reading from the N-terminus, the 373-residue chain is MTIDGDVHEISPFFQVRQTKWGGRACFSNGNIPKGTTVLQVSNFTGTSISYEFRKEVCHNCFAYANAKTMKYKLNYDYLRDLVCNAHYQINPKKFLGAGLWFCSEHCRTSYLQIPNIIELIECYEILLHHFPSMLKRYNYTSEQEEKLNSILISENVIQSSWDEIESKWIPRINNMKSAKRINQLPPTCEDEYCCIRFVCESLFNLKYMDPQCITYRAFNMLQSNELSKISKFPVLLHFQKLVFQTLYILLPSHLHRMLSIPLLRHILGTEYGNAFGLWQEGEASDSREYFGYWVFPEASYFNHSCNPNITKYRKGNSMLFTMNRDIKKDEQICIDYSGVLDLPTVKRRAFLADSWFFDCACERCKSELQSVH.

The region spanning 12–338 (PFFQVRQTKW…KDEQICIDYS (327 aa)) is the SET domain.

The protein belongs to the class V-like SAM-binding methyltransferase superfamily.

Its function is as follows. Involved in resistance to compounds that target ergosterol biosynthesis, including fenpropimorph, dyclonine, and alverine citrate. Since a deletion in the absence of these compounds does not have an effect on growth, is more likely to be involved in compound availability. The chain is Potential protein lysine methyltransferase SET6 (SET6) from Saccharomyces cerevisiae (strain ATCC 204508 / S288c) (Baker's yeast).